Here is a 146-residue protein sequence, read N- to C-terminus: Phage-like element PBSX protein XkdJ (146 aa).

The protein to B.subtilis YqbJ.

This chain is Phage-like element PBSX protein XkdJ (xkdJ), found in Bacillus subtilis (strain 168).